A 333-amino-acid chain; its full sequence is Complement C1q and tumor necrosis factor-related protein 9 (333 aa).

Positions 1–19 (MRIWWLLLVMGACTRSVFS) are cleaved as a signal peptide. Positions 22–194 (TCRQGHSGIP…GDRGEKGKVG (173 aa)) are disordered. 3 Collagen-like domains span residues 24–82 (RQGH…DGRV), 84–130 (AKGI…KGEV), and 134–193 (GPEG…KGKV). 3 positions are modified to 4-hydroxyproline: Pro-31, Pro-34, and Pro-40. Basic and acidic residues predominate over residues 42 to 57 (RDGRDGAKGDKGDAGE). 4-hydroxyproline is present on residues Pro-58, Pro-61, and Pro-64. Positions 67–88 (DGIRGEKGEPGADGRVEAKGIK) are enriched in basic and acidic residues. Lys-73 carries the 5-hydroxylysine modification. O-linked (Gal...) hydroxylysine glycosylation is present at Lys-73. 2 positions are modified to 4-hydroxyproline: Pro-76 and Pro-115. Lys-127 is modified (5-hydroxylysine). The O-linked (Gal...) hydroxylysine glycan is linked to Lys-127. 3 positions are modified to 4-hydroxyproline: Pro-151, Pro-160, and Pro-175. A compositionally biased stretch (basic and acidic residues) spans 183–193 (WKGDRGEKGKV). Positions 197–333 (PLVPKSAFTV…FTGFLLFSSS (137 aa)) constitute a C1q domain.

As to quaternary structure, multimers (predominantly trimers). Interacts with ADIPOQ via the C1q domain to form a heterotrimeric complex. The isomeric forms of the hydroxylated amino acids could not be determined in the mass-spectrometric methods reported in PubMed:18787108 but are assumed on the basis of their occurrence in collagen-like domains. As to expression, expressed predominantly in adipose tissue. Females express higher levels than males.

It is found in the secreted. Probable adipokine. Activates AMPK, AKT, and p44/42 MAPK signaling pathways. The chain is Complement C1q and tumor necrosis factor-related protein 9 (C1qtnf9) from Mus musculus (Mouse).